The chain runs to 555 residues: Glutamate--tRNA ligase (555 aa).

Residues 103–113 (PNPSGPLHIGH) carry the 'HIGH' region motif.

This sequence belongs to the class-I aminoacyl-tRNA synthetase family. Glutamate--tRNA ligase type 2 subfamily.

Its subcellular location is the cytoplasm. The catalysed reaction is tRNA(Glu) + L-glutamate + ATP = L-glutamyl-tRNA(Glu) + AMP + diphosphate. Functionally, catalyzes the attachment of glutamate to tRNA(Glu) in a two-step reaction: glutamate is first activated by ATP to form Glu-AMP and then transferred to the acceptor end of tRNA(Glu). This chain is Glutamate--tRNA ligase, found in Methanobrevibacter smithii (strain ATCC 35061 / DSM 861 / OCM 144 / PS).